The chain runs to 173 residues: NADH-ubiquinone oxidoreductase chain 6 (173 aa).

5 consecutive transmembrane segments (helical) span residues 1–21 (MAYIMLTLLIGMVLGVISVAS), 25–45 (PYFAALGLVLVAGVGCVVLMG), 53–73 (LVLFLIYLGGMLVVFAYCAAL), 87–107 (VLGSVLGYLLLVVGAGSWFWG), and 139–159 (LGGGLLVVSAWVLLLTLLVVL).

The protein belongs to the complex I subunit 6 family.

Its subcellular location is the mitochondrion membrane. It carries out the reaction a ubiquinone + NADH + 5 H(+)(in) = a ubiquinol + NAD(+) + 4 H(+)(out). Core subunit of the mitochondrial membrane respiratory chain NADH dehydrogenase (Complex I) that is believed to belong to the minimal assembly required for catalysis. Complex I functions in the transfer of electrons from NADH to the respiratory chain. The immediate electron acceptor for the enzyme is believed to be ubiquinone. In Gadus morhua (Atlantic cod), this protein is NADH-ubiquinone oxidoreductase chain 6 (MT-ND6).